We begin with the raw amino-acid sequence, 245 residues long: MVAVTGTQRTRVVSPTRWIVYAGAVFAAAWLATQLFYFVQIAMWSFVNPGSTAFMRTDAWWLSHDTPPAQIQHQWVPYDKISRNLKRAIIASEDATFATNNGYDVDAILQAWEKNKARGRIVAGGSTITQQLARNLFLSREKSYIRKGQELIITWMLETLLDKERIFEIYLNSVEWGRGVYGAEAAARYYYRIPASRLGAWQSARLAVMLPKPRWFDAHRGSAYQAQRAAIIARRMGAAELPQSE.

The chain crosses the membrane as a helical span at residues 19-39 (IVYAGAVFAAAWLATQLFYFV).

The protein belongs to the glycosyltransferase 51 family.

It localises to the cell inner membrane. The enzyme catalyses [GlcNAc-(1-&gt;4)-Mur2Ac(oyl-L-Ala-gamma-D-Glu-L-Lys-D-Ala-D-Ala)](n)-di-trans,octa-cis-undecaprenyl diphosphate + beta-D-GlcNAc-(1-&gt;4)-Mur2Ac(oyl-L-Ala-gamma-D-Glu-L-Lys-D-Ala-D-Ala)-di-trans,octa-cis-undecaprenyl diphosphate = [GlcNAc-(1-&gt;4)-Mur2Ac(oyl-L-Ala-gamma-D-Glu-L-Lys-D-Ala-D-Ala)](n+1)-di-trans,octa-cis-undecaprenyl diphosphate + di-trans,octa-cis-undecaprenyl diphosphate + H(+). It participates in cell wall biogenesis; peptidoglycan biosynthesis. Peptidoglycan polymerase that catalyzes glycan chain elongation from lipid-linked precursors. The sequence is that of Biosynthetic peptidoglycan transglycosylase from Burkholderia multivorans (strain ATCC 17616 / 249).